Here is a 186-residue protein sequence, read N- to C-terminus: High mobility group protein B4 (186 aa).

DNA-binding regions (HMG box) lie at residues 9 to 79 (PKAN…MNYV) and 93 to 161 (PRRP…ELYR). The disordered stretch occupies residues 77-98 (NYVGKRKKRRKRDPQEPRRPPS).

The protein belongs to the HMGB family.

It is found in the nucleus. The protein resides in the chromosome. In Homo sapiens (Human), this protein is High mobility group protein B4 (HMGB4).